The chain runs to 141 residues: Large ribosomal subunit protein uL11 (141 aa).

Belongs to the universal ribosomal protein uL11 family. Part of the ribosomal stalk of the 50S ribosomal subunit. Interacts with L10 and the large rRNA to form the base of the stalk. L10 forms an elongated spine to which L12 dimers bind in a sequential fashion forming a multimeric L10(L12)X complex. Post-translationally, one or more lysine residues are methylated.

Its function is as follows. Forms part of the ribosomal stalk which helps the ribosome interact with GTP-bound translation factors. The protein is Large ribosomal subunit protein uL11 of Chlamydia felis (strain Fe/C-56) (Chlamydophila felis).